The following is an 81-amino-acid chain: Photosystem I iron-sulfur center (81 aa).

4Fe-4S ferredoxin-type domains lie at 2–31 and 39–68; these read AHSV…MIPW and IASA…VRVY. [4Fe-4S] cluster is bound by residues Cys11, Cys14, Cys17, Cys21, Cys48, Cys51, Cys54, and Cys58.

As to quaternary structure, the eukaryotic PSI reaction center is composed of at least 11 subunits. [4Fe-4S] cluster serves as cofactor.

The protein localises to the plastid. It localises to the chloroplast thylakoid membrane. The enzyme catalyses reduced [plastocyanin] + hnu + oxidized [2Fe-2S]-[ferredoxin] = oxidized [plastocyanin] + reduced [2Fe-2S]-[ferredoxin]. Apoprotein for the two 4Fe-4S centers FA and FB of photosystem I (PSI); essential for photochemical activity. FB is the terminal electron acceptor of PSI, donating electrons to ferredoxin. The C-terminus interacts with PsaA/B/D and helps assemble the protein into the PSI complex. Required for binding of PsaD and PsaE to PSI. PSI is a plastocyanin-ferredoxin oxidoreductase, converting photonic excitation into a charge separation, which transfers an electron from the donor P700 chlorophyll pair to the spectroscopically characterized acceptors A0, A1, FX, FA and FB in turn. The protein is Photosystem I iron-sulfur center of Zygnema circumcarinatum (Green alga).